The sequence spans 295 residues: MNSRITLALESAPTAIKALLSDIVLADNFDATLSPEQFASLLQASGLADDELRIALLPFAAAYSYAPLSDFYVGAIVRGLSGTLYFGANLEIAGAQLGQTVHAEQSAISHAWMKGEQGISDITINFSPCGHCRQFMNELTTAKELKVQLPQRDEMSLQEYLPDSFGPADLGVTTGLMTKLDHKHTTEETTPIVVEALAALNRSHAPYTKNLSGVSLQLTSGEVFTGAYAENAAFNPSLPPLQVALIQLKLAGFDFEQIENAALVEIAEGSISHLADTQSTLEAINPDIPVTYLAI.

CMP/dCMP-type deaminase domains follow at residues 48–168 (ADDE…FGPA) and 187–295 (EETT…YLAI). Substrate is bound at residue 89-91 (NLE). His102 contacts Zn(2+). Glu104 acts as the Proton donor in catalysis. Residues Cys129 and Cys132 each coordinate Zn(2+).

Belongs to the cytidine and deoxycytidylate deaminase family. In terms of assembly, homodimer. It depends on Zn(2+) as a cofactor.

The enzyme catalyses cytidine + H2O + H(+) = uridine + NH4(+). It carries out the reaction 2'-deoxycytidine + H2O + H(+) = 2'-deoxyuridine + NH4(+). Its function is as follows. This enzyme scavenges exogenous and endogenous cytidine and 2'-deoxycytidine for UMP synthesis. In Vibrio atlanticus (strain LGP32) (Vibrio splendidus (strain Mel32)), this protein is Cytidine deaminase.